We begin with the raw amino-acid sequence, 60 residues long: Ferredoxin-1 (60 aa).

2 4Fe-4S ferredoxin-type domains span residues 2–27 and 28–60; these read LYITEECTYCGACEPECPVTAISAGD and DIYVIDANTCNECAGLDEQACVAVCPAECIVQG. Cysteine 8, cysteine 11, cysteine 14, cysteine 18, cysteine 37, cysteine 40, cysteine 48, and cysteine 52 together coordinate [4Fe-4S] cluster.

Requires [4Fe-4S] cluster as cofactor.

Its function is as follows. Ferredoxins are iron-sulfur proteins that transfer electrons in a wide variety of metabolic reactions. This chain is Ferredoxin-1, found in Chlorobium limicola.